The following is a 1279-amino-acid chain: Maestro heat-like repeat-containing protein family member 7 (1279 aa).

The interval 1–145 (MALSRGTSLI…NSSRPCSEDV (145 aa)) is disordered. A compositionally biased stretch (low complexity) spans 39–61 (PDLALAPPPEHALALTPALHPAL). Composition is skewed to polar residues over residues 71 to 106 (PVSNDIPSHNASGATTPSSTQINTVDTADQGLNHTS) and 124 to 140 (PSSTQANVLSPENSSRP). N-linked (GlcNAc...) asparagine glycans are attached at residues Asn200, Asn210, Asn255, Asn267, and Asn296. Ser356 bears the Phosphoserine mark. The N-linked (GlcNAc...) asparagine glycan is linked to Asn541. 2 helical membrane passes run 548-568 (TLVTLPFLISSGFPTLGLLLG) and 722-742 (LLPISFLASSFMTEVVVALLM). HEAT repeat units lie at residues 913–950 (QELCRILYLLIPLLERGDERHKITATAFFVELFRMEQV), 992–1029 (AKVQSLLPSMVKSLKNMDGMLVVEAVHDLKRIFKGQGK), 1035–1072 (AVYVEMLQILLPHFTDAREMVRASCINVYGKVVKKLQT), and 1080–1117 (EQLTSTLMPLLFIIQEGNAKVSQKCVKTLVCCSSFMNW).

The protein resides in the membrane. The protein is Maestro heat-like repeat-containing protein family member 7 (Mroh7) of Mus musculus (Mouse).